The chain runs to 298 residues: uncharacterized protein (298 aa).

It localises to the cytoplasm. The protein resides in the nucleus. This is an uncharacterized protein from Schizosaccharomyces pombe (strain 972 / ATCC 24843) (Fission yeast).